The following is a 281-amino-acid chain: Undecaprenyl-diphosphatase (281 aa).

The next 8 membrane-spanning stretches (helical) occupy residues 1-21 (MNVL…FLPI), 45-65 (WTAF…IYFA), 93-113 (SKLG…GLVF), 125-145 (LIVI…SEVV), 155-175 (ISWL…VPGA), 195-215 (AARF…LLEF), 227-247 (FLVL…TIAF), and 256-276 (STNV…WMVF).

This sequence belongs to the UppP family.

Its subcellular location is the cell inner membrane. The enzyme catalyses di-trans,octa-cis-undecaprenyl diphosphate + H2O = di-trans,octa-cis-undecaprenyl phosphate + phosphate + H(+). Functionally, catalyzes the dephosphorylation of undecaprenyl diphosphate (UPP). Confers resistance to bacitracin. This Syntrophobacter fumaroxidans (strain DSM 10017 / MPOB) protein is Undecaprenyl-diphosphatase.